A 181-amino-acid polypeptide reads, in one-letter code: Adenylyl-sulfate kinase (181 aa).

13–20 is an ATP binding site; the sequence is GVSGAGKS. Ser-87 (phosphoserine intermediate) is an active-site residue.

Belongs to the APS kinase family.

It catalyses the reaction adenosine 5'-phosphosulfate + ATP = 3'-phosphoadenylyl sulfate + ADP + H(+). The protein operates within sulfur metabolism; hydrogen sulfide biosynthesis; sulfite from sulfate: step 2/3. In terms of biological role, catalyzes the synthesis of activated sulfate. The polypeptide is Adenylyl-sulfate kinase (Burkholderia ambifaria (strain ATCC BAA-244 / DSM 16087 / CCUG 44356 / LMG 19182 / AMMD) (Burkholderia cepacia (strain AMMD))).